We begin with the raw amino-acid sequence, 193 residues long: Erythropoietin (193 aa).

Residues 1 to 27 form the signal peptide; the sequence is MGVHECPAWLWLLLSLLSLPLGLPVLG. 2 disulfides stabilise this stretch: Cys-34-Cys-188 and Cys-56-Cys-60. The N-linked (GlcNAc...) asparagine glycan is linked to Asn-51. N-linked (GlcNAc...) asparagine glycosylation is found at Asn-65 and Asn-110. Residue Ser-153 is glycosylated (O-linked (GalNAc...) serine).

It belongs to the EPO/TPO family. Produced by kidney or liver of adult mammals and by liver of fetal or neonatal mammals.

The protein localises to the secreted. Hormone involved in the regulation of erythrocyte proliferation and differentiation and the maintenance of a physiological level of circulating erythrocyte mass. Binds to EPOR leading to EPOR dimerization and JAK2 activation thereby activating specific downstream effectors, including STAT1 and STAT3. In Homo sapiens (Human), this protein is Erythropoietin (EPO).